A 156-amino-acid chain; its full sequence is Small ribosomal subunit protein uS7 (156 aa).

It belongs to the universal ribosomal protein uS7 family. In terms of assembly, part of the 30S ribosomal subunit. Contacts proteins S9 and S11.

Its function is as follows. One of the primary rRNA binding proteins, it binds directly to 16S rRNA where it nucleates assembly of the head domain of the 30S subunit. Is located at the subunit interface close to the decoding center, probably blocks exit of the E-site tRNA. This chain is Small ribosomal subunit protein uS7, found in Cupriavidus metallidurans (strain ATCC 43123 / DSM 2839 / NBRC 102507 / CH34) (Ralstonia metallidurans).